The chain runs to 455 residues: Bifunctional protein GlmU (455 aa).

Residues 1–226 are pyrophosphorylase; that stretch reads MGLSVVILAA…EFEILGVNDR (226 aa). Residues 8–11, Lys-22, Gln-73, 78–79, 99–101, Gly-136, Glu-151, Asn-166, and Asn-224 each bind UDP-N-acetyl-alpha-D-glucosamine; these read LAAG, GT, and YGD. A Mg(2+)-binding site is contributed by Asp-101. Asn-224 provides a ligand contact to Mg(2+). The interval 227 to 247 is linker; that stretch reads TQLASLERVWQRNVAEKIMAK. Residues 248-455 form an N-acetyltransferase region; the sequence is GVSIADPNRF…WQRSVKKTDK (208 aa). Positions 330 and 348 each coordinate UDP-N-acetyl-alpha-D-glucosamine. His-360 functions as the Proton acceptor in the catalytic mechanism. UDP-N-acetyl-alpha-D-glucosamine contacts are provided by Tyr-363 and Asn-374. Acetyl-CoA contacts are provided by residues Ala-377, 383-384, Ser-402, Ala-420, and Arg-437; that span reads NY.

The protein in the N-terminal section; belongs to the N-acetylglucosamine-1-phosphate uridyltransferase family. It in the C-terminal section; belongs to the transferase hexapeptide repeat family. Homotrimer. The cofactor is Mg(2+).

It localises to the cytoplasm. It carries out the reaction alpha-D-glucosamine 1-phosphate + acetyl-CoA = N-acetyl-alpha-D-glucosamine 1-phosphate + CoA + H(+). The enzyme catalyses N-acetyl-alpha-D-glucosamine 1-phosphate + UTP + H(+) = UDP-N-acetyl-alpha-D-glucosamine + diphosphate. It functions in the pathway nucleotide-sugar biosynthesis; UDP-N-acetyl-alpha-D-glucosamine biosynthesis; N-acetyl-alpha-D-glucosamine 1-phosphate from alpha-D-glucosamine 6-phosphate (route II): step 2/2. The protein operates within nucleotide-sugar biosynthesis; UDP-N-acetyl-alpha-D-glucosamine biosynthesis; UDP-N-acetyl-alpha-D-glucosamine from N-acetyl-alpha-D-glucosamine 1-phosphate: step 1/1. Its pathway is bacterial outer membrane biogenesis; LPS lipid A biosynthesis. Its function is as follows. Catalyzes the last two sequential reactions in the de novo biosynthetic pathway for UDP-N-acetylglucosamine (UDP-GlcNAc). The C-terminal domain catalyzes the transfer of acetyl group from acetyl coenzyme A to glucosamine-1-phosphate (GlcN-1-P) to produce N-acetylglucosamine-1-phosphate (GlcNAc-1-P), which is converted into UDP-GlcNAc by the transfer of uridine 5-monophosphate (from uridine 5-triphosphate), a reaction catalyzed by the N-terminal domain. The polypeptide is Bifunctional protein GlmU (Francisella tularensis subsp. tularensis (strain FSC 198)).